Reading from the N-terminus, the 382-residue chain is Alcohol dehydrogenase 4 (382 aa).

Positions 40, 72, 99, 100, 139, 140, 148, 150, 161, and 183 each coordinate NAD(+). Residues D195, H199, and H264 each coordinate Fe(2+). Residues H268 and H278 each coordinate NAD(+). Residue H278 participates in Fe(2+) binding.

Belongs to the iron-containing alcohol dehydrogenase family. Homodimer. Zn(2+) is required as a cofactor. It depends on Fe(2+) as a cofactor.

The protein localises to the mitochondrion. The catalysed reaction is a primary alcohol + NAD(+) = an aldehyde + NADH + H(+). It catalyses the reaction ethanol + NAD(+) = acetaldehyde + NADH + H(+). Inhibited by EDTA. Functionally, alcohol dehydrogenase specific for ethanol. Acts mainyl as a mitochondrial formaldehyde dehydrogenase and has no effect on ethanol production. Shows drastically reduced activity towards primary alcohols from 4 carbon atoms upward. Isomers of aliphatic alcohol, as well as secondary alcohols and glycerol are not used at all. The role of ADH4 in yeast metabolism is not yet known, but ADH4 is not responsible for the production of ethanol during growth on glucose nor responsible for the oxidation of ethanol to acetaldehyde. This Saccharomyces cerevisiae (strain ATCC 204508 / S288c) (Baker's yeast) protein is Alcohol dehydrogenase 4.